A 208-amino-acid chain; its full sequence is Ectodysplasin-A receptor-associated adapter protein (208 aa).

Basic and acidic residues predominate over residues 1–18; the sequence is MASPDDPLRSDHMAKEPV. Residues 1–99 form a disordered region; the sequence is MASPDDPLRS…KGSCSCPSCS (99 aa). Polar residues predominate over residues 49–61; it reads TVNSNCPPNSDDQ. Positions 116-195 constitute a Death domain; sequence DTIRIKLDPC…KILRRWVDEE (80 aa).

In terms of assembly, binds EDAR. Self-associates and binds TRAF1, TRAF2 and TRAF3.

It is found in the cytoplasm. In terms of biological role, adapter protein that interacts with EDAR DEATH domain and couples the receptor to EDA signaling pathway during morphogenesis of ectodermal organs. Mediates the activation of NF-kappa-B. The chain is Ectodysplasin-A receptor-associated adapter protein (Edaradd) from Mus musculus (Mouse).